Consider the following 328-residue polypeptide: MVDRGLLYREWKQNQVVILLSIAFLVLANPLSIVNTYLSYQGCLDRQDPQYCDFIVNYSISNLIDINWVPGVILAVCFLGMERSKGTMDFILSLPYNRSQIFQTKFWLGGFVIVLSQLIGFLLAWLLILVYNPEHVYFFEHSSIGVIVISFMAFSLVMAAGALTGNAFAQLLTAFSAAILPYLIIALPVGNLEVVFGANIWEIFPSPESYFSLASNLSNLVPISYVVNEWLINSKYLLLIPAVMSMLFYLIGFISFKKLPSERNGHFFLWNRLDRPVQILVMAFGILGFGLFGYYTGHSIIGYILGMIIGAVAGFFVSYFSIYKKTKV.

A run of 8 helical transmembrane segments spans residues 16–36 (VVILLSIAFLVLANPLSIVNT), 60–80 (ISNLIDINWVPGVILAVCFLG), 110–130 (GFVIVLSQLIGFLLAWLLILV), 144–164 (IGVIVISFMAFSLVMAAGALT), 167–187 (AFAQLLTAFSAAILPYLIIAL), 236–256 (YLLLIPAVMSMLFYLIGFISF), 277–297 (VQILVMAFGILGFGLFGYYTG), and 300–320 (IIGYILGMIIGAVAGFFVSYF).

This sequence belongs to the ABC-5 integral membrane protein family. In terms of assembly, the complex is composed of 2 ATP-binding proteins (YtrB and YtrE), 2 transmembrane proteins (YtrC and YtrD) and a solute-binding protein (YtrF).

The protein localises to the cell membrane. In terms of biological role, part of the ABC transporter complex YtrBCDEF that plays a role in acetoin utilization during stationary phase and sporulation. The chain is Probable ABC transporter permease YtrC (ytrC) from Bacillus subtilis (strain 168).